Reading from the N-terminus, the 296-residue chain is PYK10-binding protein 2 (296 aa).

The tract at residues 1-20 is disordered; the sequence is MAQKVEAKGGKGGNQWDDGS. Residue Ala-2 is modified to N-acetylalanine. 2 Jacalin-type lectin domains span residues 2–142 and 150–293; these read AQKV…YFAP and AKPL…HVRP.

The protein belongs to the jacalin lectin family. Component of the PYK10 complex, at least composed of PYK10/BGLU23, BGLU21, BGLU22, JAL22, JAL23, PBP1/JAL30, PBP2/JAL31, JAL32, JAL33, JAL34, JAL35, GLL22 and GLL23.

Functionally, polymerizer-type lectin that may facilitate the correct polymerization of BGLU23/PYK10 upon tissue damage. Activates BGLU21, BGLU22 and BGLU23. This chain is PYK10-binding protein 2 (PBP2), found in Arabidopsis thaliana (Mouse-ear cress).